The following is a 344-amino-acid chain: MACAVFQIPPWHLDRKYGSCSTILLDNSTASQPDLRHTLERYANRSLAIFEEPVHPLPQEKLPGKSFKHDPKRNCIFRHFCTLFQVIKLTAPCAIVALVYIKRLLTSANIDLCPTNWKKIVLGTMLLASKVWRNHGLWSVDDSQNSKDTAVENMSKMEKCFLELLEFNIHVSASVYAKYYFDLCALANDHDLYFLFSFLHKDKAQKLEGHTSQHSLSLGPCRVGMENYATYSPLSSQPVLGALSLAEVLPQEIKQEIHQVLMDHGVPCHYTCFLLHPEDSTLERFLVLHSIQGLQEDSVLCKVEIHGLSPQPQTYQSHFRSPSLAELLNRISGTCRNHFAGMQK.

The 131-residue stretch at 40–170 folds into the Cyclin N-terminal domain; it reads ERYANRSLAI…FLELLEFNIH (131 aa).

This sequence belongs to the cyclin family. Cyclin Y subfamily.

In Homo sapiens (Human), this protein is Putative cyclin-Y-like protein 3 (CCNYL3).